A 2185-amino-acid polypeptide reads, in one-letter code: Genome polyprotein (2185 aa).

A lipid anchor (N-myristoyl glycine; by host) is attached at Gly2. Topologically, residues 2–1495 are cytoplasmic; it reads GAQVSTQKTG…HVSRAFICLQ (1494 aa). The tract at residues 568–584 is amphipathic alpha-helix; sequence FFQGPVEDAITAAIGRV. Active-site for protease 2A activity residues include His872 and Asp890. Zn(2+) is bound by residues Cys907 and Cys909. Cys961 (for protease 2A activity) is an active-site residue. Zn(2+)-binding residues include Cys967 and His969. The membrane-binding stretch occupies residues 1101–1173; sequence NNGWLKKFTE…EQSAPSQSDQ (73 aa). The tract at residues 1101–1239 is oligomerization; the sequence is NNGWLKKFTE…SPGAGKSVAT (139 aa). Residues 1122–1126 are RNA-binding; it reads AIKIQ. The region spanning 1205 to 1361 is the SF3 helicase domain; the sequence is EKKMSNYIQF…SMYSQNGKIN (157 aa). Positions 1369, 1381, and 1386 each coordinate Zn(2+). Residues 1369 to 1386 form a C4-type; degenerate zinc finger; it reads CDEECCPVNFKKCCPLVC. The RNA-binding stretch occupies residues 1413-1420; sequence EYNHRHSV. The interval 1424–1429 is oligomerization; it reads LEALFQ. An intramembrane segment occupies 1496–1511; that stretch reads AITTFVSVAGIIYIIY. Residues 1512-2185 lie on the Cytoplasmic side of the membrane; it reads KLFAGFQGAY…TIRRKWLDSF (674 aa). An O-(5'-phospho-RNA)-tyrosine modification is found at Tyr1521. Residues 1541–1719 enclose the Peptidase C3 domain; that stretch reads GPAFEFAVAM…FSAALLKHYF (179 aa). Active-site for protease 3C activity residues include His1580, Glu1611, and Cys1687. In terms of domain architecture, RdRp catalytic spans 1950–2066; it reads GHLIAFDYSG…SYPWPIDASL (117 aa). Positions 1956 and 2052 each coordinate Mg(2+).

It belongs to the picornaviruses polyprotein family. As to quaternary structure, interacts with capsid protein VP1 and capsid protein VP3 to form heterotrimeric protomers. In terms of assembly, interacts with capsid protein VP0, and capsid protein VP3 to form heterotrimeric protomers. Five protomers subsequently associate to form pentamers which serve as building blocks for the capsid. Interacts with capsid protein VP2, capsid protein VP3 and capsid protein VP4 following cleavage of capsid protein VP0. Interacts with host CD55. Interacts with host CXADR. Interacts with capsid protein VP1 and capsid protein VP3 in the mature capsid. As to quaternary structure, interacts with capsid protein VP0 and capsid protein VP1 to form heterotrimeric protomers. Five protomers subsequently associate to form pentamers which serve as building blocks for the capsid. Interacts with capsid protein VP4 in the mature capsid. Interacts with protein 2C; this interaction may be important for virion morphogenesis. In terms of assembly, interacts with capsid protein VP1 and capsid protein VP3. Homodimer. As to quaternary structure, homohexamer; forms a hexameric ring structure with 6-fold symmetry characteristic of AAA+ ATPases. Interacts (via N-terminus) with host RTN3 (via reticulon domain); this interaction is important for viral replication. Interacts with capsid protein VP3; this interaction may be important for virion morphogenesis. In terms of assembly, interacts with protein 3CD. Homodimer. Interacts with host GBF1. Interacts (via GOLD domain) with host ACBD3 (via GOLD domain); this interaction allows the formation of a viral protein 3A/ACBD3 heterotetramer with a 2:2 stoichiometry, which will stimulate the recruitment of host PI4KB in order to synthesize PI4P at the viral RNA replication sites. As to quaternary structure, interacts with RNA-directed RNA polymerase. In terms of assembly, interacts with host TICAM1 (via C-terminus). Interacts with protein 3AB and with RNA-directed RNA polymerase. As to quaternary structure, interacts with Viral protein genome-linked and with protein 3CD. Requires Mg(2+) as cofactor. In terms of processing, specific enzymatic cleavages in vivo by the viral proteases yield processing intermediates and the mature proteins. Post-translationally, myristoylation is required for the formation of pentamers during virus assembly. Further assembly of 12 pentamers and a molecule of genomic RNA generates the provirion. During virion maturation, immature virions are rendered infectious following cleavage of VP0 into VP4 and VP2. This maturation seems to be an autocatalytic event triggered by the presence of RNA in the capsid and it is followed by a conformational change infectious virion. In terms of processing, myristoylation is required during RNA encapsidation and formation of the mature virus particle. Post-translationally, VPg is uridylylated by the polymerase into VPg-pUpU. This acts as a nucleotide-peptide primer for the genomic RNA replication.

It localises to the virion. The protein localises to the host cytoplasm. Its subcellular location is the host cytoplasmic vesicle membrane. It is found in the host nucleus. It carries out the reaction a ribonucleoside 5'-triphosphate + H2O = a ribonucleoside 5'-diphosphate + phosphate + H(+). The enzyme catalyses Selective cleavage of Tyr-|-Gly bond in the picornavirus polyprotein.. It catalyses the reaction RNA(n) + a ribonucleoside 5'-triphosphate = RNA(n+1) + diphosphate. The catalysed reaction is Selective cleavage of Gln-|-Gly bond in the poliovirus polyprotein. In other picornavirus reactions Glu may be substituted for Gln, and Ser or Thr for Gly.. Replication or transcription is subject to high level of random mutations by the nucleotide analog ribavirin. Functionally, forms an icosahedral capsid of pseudo T=3 symmetry with capsid proteins VP2 and VP3. The capsid is 300 Angstroms in diameter, composed of 60 copies of each capsid protein and enclosing the viral positive strand RNA genome. Capsid protein VP1 mainly forms the vertices of the capsid. Capsid protein VP1 interacts with host cell receptors CD55 and CXADR to provide virion attachment to target host cells. This attachment induces virion internalization. Tyrosine kinases are probably involved in the entry process. After binding to its receptor, the capsid undergoes conformational changes. Capsid protein VP1 N-terminus (that contains an amphipathic alpha-helix) and capsid protein VP4 are externalized. Together, they shape a pore in the host membrane through which viral genome is translocated to host cell cytoplasm. In terms of biological role, forms an icosahedral capsid of pseudo T=3 symmetry with capsid proteins VP2 and VP3. The capsid is 300 Angstroms in diameter, composed of 60 copies of each capsid protein and enclosing the viral positive strand RNA genome. Lies on the inner surface of the capsid shell. After binding to the host receptor, the capsid undergoes conformational changes. Capsid protein VP4 is released, Capsid protein VP1 N-terminus is externalized, and together, they shape a pore in the host membrane through which the viral genome is translocated into the host cell cytoplasm. Its function is as follows. Component of immature procapsids, which is cleaved into capsid proteins VP4 and VP2 after maturation. Allows the capsid to remain inactive before the maturation step. Functionally, cysteine protease that cleaves viral polyprotein and specific host proteins. It is responsible for the autocatalytic cleavage between the P1 and P2 regions, which is the first cleavage occurring in the polyprotein. Also cleaves the host translation initiation factor EIF4G1, in order to shut down the capped cellular mRNA translation. Inhibits the host nucleus-cytoplasm protein and RNA trafficking by cleaving host members of the nuclear pores. Counteracts stress granule formation probably by antagonizing its assembly or promoting its dissassembly. Cleaves and inhibits host IFIH1/MDA5, thereby inhibiting the type-I IFN production and the establishment of the antiviral state. Cleaves and inhibits host MAVS, thereby inhibiting the type-I IFN production and the establishment of the antiviral state. In terms of biological role, plays an essential role in the virus replication cycle by acting as a viroporin. Creates a pore in the host endoplasmic reticulum and as a consequence releases Ca2+ in the cytoplasm of infected cell. In turn, high levels of cytoplasmic calcium may trigger membrane trafficking and transport of viral ER-associated proteins to viroplasms, sites of viral genome replication. Induces and associates with structural rearrangements of intracellular membranes. Displays RNA-binding, nucleotide binding and NTPase activities. May play a role in virion morphogenesis and viral RNA encapsidation by interacting with the capsid protein VP3. Its function is as follows. Localizes the viral replication complex to the surface of membranous vesicles. Together with protein 3CD binds the Cis-Active RNA Element (CRE) which is involved in RNA synthesis initiation. Acts as a cofactor to stimulate the activity of 3D polymerase, maybe through a nucleid acid chaperone activity. Functionally, localizes the viral replication complex to the surface of membranous vesicles. It inhibits host cell endoplasmic reticulum-to-Golgi apparatus transport and causes the disassembly of the Golgi complex, possibly through GBF1 interaction. This would result in depletion of MHC, trail receptors and IFN receptors at the host cell surface. Plays an essential role in viral RNA replication by recruiting ACBD3 and PI4KB at the viral replication sites, thereby allowing the formation of the rearranged membranous structures where viral replication takes place. In terms of biological role, acts as a primer for viral RNA replication and remains covalently bound to viral genomic RNA. VPg is uridylylated prior to priming replication into VPg-pUpU. The oriI viral genomic sequence may act as a template for this. The VPg-pUpU is then used as primer on the genomic RNA poly(A) by the RNA-dependent RNA polymerase to replicate the viral genome. During genome replication, the VPg-RNA linkage is removed by the host TDP2, thereby accelerating replication. During the late stage of the replication cycle, host TDP2 is excluded from sites of viral RNA synthesis and encapsidation, allowing for the generation of progeny virions. Involved in the viral replication complex and viral polypeptide maturation. It exhibits protease activity with a specificity and catalytic efficiency that is different from protease 3C. Protein 3CD lacks polymerase activity. Protein 3CD binds to the 5'UTR of the viral genome. Its function is as follows. Major viral protease that mediates proteolytic processing of the polyprotein. Cleaves host EIF5B, contributing to host translation shutoff. Also cleaves host PABPC1, contributing to host translation shutoff. Cleaves and inhibits host RIGI, thereby inhibiting the type-I IFN production and the establishment of the antiviral state. Cleaves and inhibits host MAVS, thereby inhibiting the type-I IFN production and the establishment of the antiviral state. Cleaves and inhibits host TICAM1/TRIF, thereby inhibiting the type-I IFN production. Cleaves host NLRP1, triggers host N-glycine-mediated degradation of the autoinhibitory NLRP1 N-terminal fragment. Functionally, replicates the viral genomic RNA on the surface of intracellular membranes. May form linear arrays of subunits that propagate along a strong head-to-tail interaction called interface-I. Covalently attaches UMP to a tyrosine of VPg, which is used to prime RNA synthesis. The positive stranded RNA genome is first replicated at virus induced membranous vesicles, creating a dsRNA genomic replication form. This dsRNA is then used as template to synthesize positive stranded RNA genomes. ss(+)RNA genomes are either translated, replicated or encapsidated. This Homo sapiens (Human) protein is Genome polyprotein.